The primary structure comprises 134 residues: uncharacterized protein (134 aa).

Its subcellular location is the cell membrane. Its function is as follows. May have a role in the regulation of NDH-1 biosynthesis. This is an uncharacterized protein from Paracoccus denitrificans.